The primary structure comprises 317 residues: Putative cuticle collagen 80 (317 aa).

The interval 80–262 is disordered; the sequence is CNCGPQASNC…GAPGNDGAPG (183 aa). Triple-helical region stretches follow at residues 92–124, 137–199, and 202–264; these read GPPG…AGPA, GAPG…SGQR, and GLPG…PGSD. 3 stretches are compositionally biased toward low complexity: residues 108–124, 135–145, and 175–206; these read QPGP…AGPA, PQGAPGPAGAP, and AGDA…LPGP. 2 stretches are compositionally biased toward pro residues: residues 207 to 219 and 230 to 240; these read SGRP…PGAP and PAGPPGPPGPN. Low complexity predominate over residues 242-262; the sequence is QPGHPGQDGQPGAPGNDGAPG.

Belongs to the cuticular collagen family. As to quaternary structure, collagen polypeptide chains are complexed within the cuticle by disulfide bonds and other types of covalent cross-links.

Nematode cuticles are composed largely of collagen-like proteins. The cuticle functions both as an exoskeleton and as a barrier to protect the worm from its environment. In Caenorhabditis elegans, this protein is Putative cuticle collagen 80 (col-80).